Consider the following 567-residue polypeptide: Potassium-transporting ATPase potassium-binding subunit (567 aa).

11 helical membrane-spanning segments follow: residues 5–25 (GWIQ…PLGG), 64–84 (TTYA…LYML), 136–156 (GLTV…IALI), 179–199 (LYVL…LGVP), 254–274 (ISNM…TNVF), 285–305 (WAIF…CYWA), 332–352 (IAMS…AVIA), 359–376 (ALGG…EIII), 421–441 (MLAV…ASVI), 486–506 (ITIG…AMAI), and 529–549 (LFVG…FFPA).

The protein belongs to the KdpA family. As to quaternary structure, the system is composed of three essential subunits: KdpA, KdpB and KdpC.

The protein resides in the cell inner membrane. Part of the high-affinity ATP-driven potassium transport (or Kdp) system, which catalyzes the hydrolysis of ATP coupled with the electrogenic transport of potassium into the cytoplasm. This subunit binds the periplasmic potassium ions and delivers the ions to the membrane domain of KdpB through an intramembrane tunnel. This Brucella anthropi (strain ATCC 49188 / DSM 6882 / CCUG 24695 / JCM 21032 / LMG 3331 / NBRC 15819 / NCTC 12168 / Alc 37) (Ochrobactrum anthropi) protein is Potassium-transporting ATPase potassium-binding subunit.